Reading from the N-terminus, the 147-residue chain is Hemoglobin subunit deltaH (147 aa).

The Globin domain occupies 3–147; it reads RLTDSEKAEV…MANALAHKYH (145 aa). His-64 and His-93 together coordinate heme b.

Belongs to the globin family. In terms of assembly, heterotetramer of two delta chains and two alpha chains. As to expression, red blood cells.

This is Hemoglobin subunit deltaH from Procavia capensis (Rock hyrax).